We begin with the raw amino-acid sequence, 595 residues long: Methionine--tRNA ligase (595 aa).

Residues 11–21 (PYANGPRHIGH) carry the 'HIGH' region motif. Zn(2+) is bound by residues C143, C146, C156, and C159. The 'KMSKS' region signature appears at 350-354 (KFSSS). Residue S353 participates in ATP binding.

This sequence belongs to the class-I aminoacyl-tRNA synthetase family. MetG type 1 subfamily. In terms of assembly, monomer. Zn(2+) is required as a cofactor.

The protein localises to the cytoplasm. The enzyme catalyses tRNA(Met) + L-methionine + ATP = L-methionyl-tRNA(Met) + AMP + diphosphate. In terms of biological role, is required not only for elongation of protein synthesis but also for the initiation of all mRNA translation through initiator tRNA(fMet) aminoacylation. In Nocardioides sp. (strain ATCC BAA-499 / JS614), this protein is Methionine--tRNA ligase.